Here is a 433-residue protein sequence, read N- to C-terminus: Sulfhydrylase FUB7 (433 aa).

Lys-211 carries the post-translational modification N6-(pyridoxal phosphate)lysine.

Belongs to the trans-sulfuration enzymes family. It depends on pyridoxal 5'-phosphate as a cofactor.

It participates in mycotoxin biosynthesis. Functionally, sulfhydrylase; part of the gene cluster that mediates the biosynthesis of fusaric acid, a mycotoxin with low to moderate toxicity to animals and humans, but with high phytotoxic properties. L-aspartate is suggested as fusaric acid amino acid precursor that is activated and further processed to O-acetyl-L-homoserine by cluster enzymes aspartate kinase FUB3 and homoserine O-acetyltransferase FUB5, as well as enzymes of the primary metabolism. The polyketide synthase (PKS) FUB1 generates the triketide trans-2-hexenal which is presumptively released by the hydrolase FUB4 and linked to the NRPS-bound amino acid precursor by NAD(P)-dependent dehydrogenase FUB6. FUB1, FUB4, and the non-canonical NRPS Fub8 may form an enzyme complex. Further processing of the NRPS-bound intermediate might be carried out by FUB6 and the sulfhydrylase FUB7, enabling a spontaneous electrocyclization to close the carbon backbone of fusaric acid. Dihydrofusaric acid is likely to be released via reduction by the thioester reductase (TR) domain of FUB8 whereupon the final oxidation to fusaric acid may (also) be performed by the FMN-dependent dehydrogenase FUB9. The sequence is that of Sulfhydrylase FUB7 from Fusarium oxysporum f. sp. lycopersici (strain 4287 / CBS 123668 / FGSC 9935 / NRRL 34936) (Fusarium vascular wilt of tomato).